We begin with the raw amino-acid sequence, 146 residues long: Large ribosomal subunit protein uL15 (146 aa).

The tract at residues 1–56 (MKLHELKAAEGANKASKRVGRGTGSGLGKTSGRGQNGQNSRSGGGVRPGFEGGQMP) is disordered. Composition is skewed to gly residues over residues 21–35 (RGTG…GRGQ) and 42–52 (SGGGVRPGFEG).

This sequence belongs to the universal ribosomal protein uL15 family. As to quaternary structure, part of the 50S ribosomal subunit.

Functionally, binds to the 23S rRNA. This chain is Large ribosomal subunit protein uL15, found in Clostridium botulinum (strain ATCC 19397 / Type A).